We begin with the raw amino-acid sequence, 839 residues long: NT-3 growth factor receptor (839 aa).

The first 31 residues, 1–31 (MDVSLCPAKCSFWRIFLLGSVWLDYVGSVLA), serve as a signal peptide directing secretion. 2 cysteine pairs are disulfide-bonded: cysteine 32–cysteine 38 and cysteine 36–cysteine 45. Over 32 to 429 (CPANCVCSKT…TVTHKPEEDT (398 aa)) the chain is Extracellular. Asparagine 72 and asparagine 79 each carry an N-linked (GlcNAc...) asparagine glycan. LRR repeat units lie at residues 104-125 (GLQK…AFAK) and 128-149 (HLRY…LFQT). N-linked (GlcNAc...) asparagine glycosylation is found at asparagine 133 and asparagine 163. The region spanning 160–209 (NFFNCSCDIRWMQLWQEQGEAKLNSQNLYCINADGSQLPLFRMNISQCDL) is the LRRCT domain. Disulfide bonds link cysteine 164/cysteine 189 and cysteine 166/cysteine 207. N-linked (GlcNAc...) asparagine glycosylation is found at asparagine 203, asparagine 218, asparagine 232, asparagine 259, asparagine 267, asparagine 272, and asparagine 294. Ig-like C2-type domains follow at residues 210–300 (PEIS…VALT) and 309–382 (SLEE…IAKN). Cysteine 231 and cysteine 284 are oxidised to a cystine. The cysteines at positions 320 and 362 are disulfide-linked. N-linked (GlcNAc...) asparagine glycosylation is found at asparagine 375 and asparagine 388. A helical membrane pass occupies residues 430–453 (FGVSIAVGLAAFACVLLVVLFVMI). Over 454–839 (NKYGRRSKFG…ATPIYLDILG (386 aa)) the chain is Cytoplasmic. Serine 493 is modified (phosphoserine). Tyrosine 516 is modified (phosphotyrosine; by autocatalysis). The Protein kinase domain maps to 538–839 (IVLKRELGEG…ATPIYLDILG (302 aa)). ATP contacts are provided by residues 544–552 (LGEGAFGKV) and lysine 572. Aspartate 679 serves as the catalytic Proton acceptor. Residues tyrosine 705, tyrosine 709, and tyrosine 710 each carry the phosphotyrosine; by autocatalysis modification.

The protein belongs to the protein kinase superfamily. Tyr protein kinase family. Insulin receptor subfamily. As to quaternary structure, exists in a dynamic equilibrium between monomeric (low affinity) and dimeric (high affinity) structures. Binds SH2B2. Interacts with SQSTM1 and KIDINS220. Interacts with PTPRS. Interacts with MAPK8IP3/JIP3. Post-translationally, ligand-mediated auto-phosphorylation. As to expression, widely expressed but mainly in nervous tissue. Isoform 2 is expressed at higher levels in adult brain than in fetal brain.

The protein localises to the membrane. It catalyses the reaction L-tyrosyl-[protein] + ATP = O-phospho-L-tyrosyl-[protein] + ADP + H(+). Functionally, receptor tyrosine kinase involved in nervous system and probably heart development. Upon binding of its ligand NTF3/neurotrophin-3, NTRK3 autophosphorylates and activates different signaling pathways, including the phosphatidylinositol 3-kinase/AKT and the MAPK pathways, that control cell survival and differentiation. In Homo sapiens (Human), this protein is NT-3 growth factor receptor (NTRK3).